Here is a 446-residue protein sequence, read N- to C-terminus: tRNA-2-methylthio-N(6)-dimethylallyladenosine synthase (446 aa).

Residues 3-120 (KKIYIKTFGC…LPEMLKQRRS (118 aa)) enclose the MTTase N-terminal domain. The [4Fe-4S] cluster site is built by C12, C49, C83, C157, C161, and C164. Positions 143-375 (KVEGATAFVS…QAVIDQNTRR (233 aa)) constitute a Radical SAM core domain. The region spanning 378–444 (DEMVGSVQRI…AYTLRGEIVV (67 aa)) is the TRAM domain.

The protein belongs to the methylthiotransferase family. MiaB subfamily. In terms of assembly, monomer. [4Fe-4S] cluster is required as a cofactor.

It is found in the cytoplasm. The enzyme catalyses N(6)-dimethylallyladenosine(37) in tRNA + (sulfur carrier)-SH + AH2 + 2 S-adenosyl-L-methionine = 2-methylsulfanyl-N(6)-dimethylallyladenosine(37) in tRNA + (sulfur carrier)-H + 5'-deoxyadenosine + L-methionine + A + S-adenosyl-L-homocysteine + 2 H(+). Functionally, catalyzes the methylthiolation of N6-(dimethylallyl)adenosine (i(6)A), leading to the formation of 2-methylthio-N6-(dimethylallyl)adenosine (ms(2)i(6)A) at position 37 in tRNAs that read codons beginning with uridine. The polypeptide is tRNA-2-methylthio-N(6)-dimethylallyladenosine synthase (Herminiimonas arsenicoxydans).